A 412-amino-acid polypeptide reads, in one-letter code: Histidinol dehydrogenase (412 aa).

NAD(+) contacts are provided by tyrosine 118, glutamine 176, and asparagine 199. Substrate contacts are provided by threonine 222, glutamine 244, and histidine 247. Zn(2+) is bound by residues glutamine 244 and histidine 247. Catalysis depends on proton acceptor residues glutamate 311 and histidine 312. Residues histidine 312, aspartate 345, glutamate 399, and histidine 404 each coordinate substrate. Aspartate 345 is a Zn(2+) binding site. Position 404 (histidine 404) interacts with Zn(2+).

This sequence belongs to the histidinol dehydrogenase family. Zn(2+) serves as cofactor.

It carries out the reaction L-histidinol + 2 NAD(+) + H2O = L-histidine + 2 NADH + 3 H(+). It functions in the pathway amino-acid biosynthesis; L-histidine biosynthesis; L-histidine from 5-phospho-alpha-D-ribose 1-diphosphate: step 9/9. Its function is as follows. Catalyzes the sequential NAD-dependent oxidations of L-histidinol to L-histidinaldehyde and then to L-histidine. The protein is Histidinol dehydrogenase of Thermus thermophilus (strain ATCC BAA-163 / DSM 7039 / HB27).